A 486-amino-acid polypeptide reads, in one-letter code: tRNA sulfurtransferase (486 aa).

The 107-residue stretch at 60 to 166 folds into the THUMP domain; sequence QKICAMLINI…DNQLFIIIKR (107 aa). ATP-binding positions include 184 to 185, Lys-266, Gly-288, and Gln-297; that span reads LI. A disulfide bond links Cys-345 and Cys-458. Residues 406–484 enclose the Rhodanese domain; the sequence is LDSTDVVLDI…GFSNVKIYRP (79 aa). Cys-458 functions as the Cysteine persulfide intermediate in the catalytic mechanism.

This sequence belongs to the ThiI family.

Its subcellular location is the cytoplasm. It catalyses the reaction [ThiI sulfur-carrier protein]-S-sulfanyl-L-cysteine + a uridine in tRNA + 2 reduced [2Fe-2S]-[ferredoxin] + ATP + H(+) = [ThiI sulfur-carrier protein]-L-cysteine + a 4-thiouridine in tRNA + 2 oxidized [2Fe-2S]-[ferredoxin] + AMP + diphosphate. The enzyme catalyses [ThiS sulfur-carrier protein]-C-terminal Gly-Gly-AMP + S-sulfanyl-L-cysteinyl-[cysteine desulfurase] + AH2 = [ThiS sulfur-carrier protein]-C-terminal-Gly-aminoethanethioate + L-cysteinyl-[cysteine desulfurase] + A + AMP + 2 H(+). It functions in the pathway cofactor biosynthesis; thiamine diphosphate biosynthesis. In terms of biological role, catalyzes the ATP-dependent transfer of a sulfur to tRNA to produce 4-thiouridine in position 8 of tRNAs, which functions as a near-UV photosensor. Also catalyzes the transfer of sulfur to the sulfur carrier protein ThiS, forming ThiS-thiocarboxylate. This is a step in the synthesis of thiazole, in the thiamine biosynthesis pathway. The sulfur is donated as persulfide by IscS. This Blochmanniella pennsylvanica (strain BPEN) protein is tRNA sulfurtransferase.